Here is a 360-residue protein sequence, read N- to C-terminus: MEYETNFRKKHICSNCGRSGHEFRNCIEPITSYGIINVCISDEYNESMIIKDKFCTKKNTYYRVSSRKHPEISCFISNHIRVRDHENMYKLDNEMIPYRSNEDIHKFCYYKNRILFMMVSRRFSLGFIEFIRGKYDVSDTKSIINLFQHMYEHEIKFINKNRYKYDNILYHFLNRNNEPKKIVLNRIYEGKYSNEYCEAKIKFNMLLNSSNEENNNIPVYLEFYIKHIKPKWKSPEWGFPKGRRDKRSEENMVCACREFEEETGYKKSDYSVLNKIEPIEEKLTGTNGVNYKHIYYLAINNCDINSDLTDYDTYEIGEIKWFTYDEAMARIRPYHIEKKRILTRVYLFILNYLIHNINNT.

The CCHC-type zinc finger occupies 11–28; it reads HICSNCGRSGHEFRNCIE. The Nudix hydrolase domain maps to 163-347; sequence YKYDNILYHF…KKRILTRVYL (185 aa). Positions 242–264 match the Nudix box motif; it reads GRRDKRSEENMVCACREFEEETG. Glu-249 contacts Mg(2+). Glu-258 (nucleophile) is an active-site residue. Residue Glu-262 participates in Mg(2+) binding.

It belongs to the Nudix hydrolase family. DIPP subfamily. Mg(2+) serves as cofactor. Mn(2+) is required as a cofactor.

The catalysed reaction is diphospho-myo-inositol polyphosphate + H2O = myo-inositol polyphosphate + phosphate.. Functionally, might function as a decapping enzyme required for the removal of the 5'-end m7GpppN cap tethered to viral and host mRNAs to allow their decay in cells. In addition to the mRNA cap, probably also efficiently hydrolyzes diphosphoinositol polyphosphates. The protein is Putative mRNA-decapping protein of Acanthamoeba polyphaga (Amoeba).